The primary structure comprises 338 residues: MGIESTSHTFGVGIVKYVSSINETRILANTYDKYIPEKGGIHPREAALHHARVAAKVLSDALQKANISMRDVSAIAVALGPGLGPCLRVGASLARFLSSYYNIPLIPVNHAVAHIEIGKFLFGFKDPLIIYVSGGNTLIAIQRKKRYRILGETLDIPIGNLLDTFAREIGLAPPYIVNGKHQVDICAEWGSEFISLPYTVKGSDLSFSGLLTAALSLAEKYIDNKKKLGNVCLSLRETAFNMLVEVAERSLVLAGKKEVLLVGGVASNKVLRKKLELMASLHGAKYAGTPPEYSGDNGAMIAYTGLLGYLHNVIVEPRKAFVRQRWRLDEVELPWIQD.

The Fe cation site is built by His110, His114, and Tyr131. Residues 131-135 (YVSGG), Asp163, Asp184, and Asn268 each bind substrate. Asp296 contributes to the Fe cation binding site.

Belongs to the KAE1 / TsaD family. Requires Fe(2+) as cofactor.

It is found in the cytoplasm. It carries out the reaction L-threonylcarbamoyladenylate + adenosine(37) in tRNA = N(6)-L-threonylcarbamoyladenosine(37) in tRNA + AMP + H(+). Its function is as follows. Required for the formation of a threonylcarbamoyl group on adenosine at position 37 (t(6)A37) in tRNAs that read codons beginning with adenine. Is probably involved in the transfer of the threonylcarbamoyl moiety of threonylcarbamoyl-AMP (TC-AMP) to the N6 group of A37. The chain is tRNA N6-adenosine threonylcarbamoyltransferase from Staphylothermus marinus (strain ATCC 43588 / DSM 3639 / JCM 9404 / F1).